Consider the following 178-residue polypeptide: Cytochrome b6-f complex iron-sulfur subunit (178 aa).

Residues 20-42 (LLTFGTATGVALGALYPVANFFM) form a helical membrane-spanning segment. Residues 71–161 (NHPAGDRSLV…IDIDDDNVLV (91 aa)) form the Rieske domain. [2Fe-2S] cluster is bound by residues Cys107, His109, Cys125, and His128. A disulfide bond links Cys112 and Cys127.

Belongs to the Rieske iron-sulfur protein family. In terms of assembly, the 4 large subunits of the cytochrome b6-f complex are cytochrome b6, subunit IV (17 kDa polypeptide, PetD), cytochrome f and the Rieske protein, while the 4 small subunits are PetG, PetL, PetM and PetN. The complex functions as a dimer. It depends on [2Fe-2S] cluster as a cofactor.

The protein localises to the cellular thylakoid membrane. The enzyme catalyses 2 oxidized [plastocyanin] + a plastoquinol + 2 H(+)(in) = 2 reduced [plastocyanin] + a plastoquinone + 4 H(+)(out). Component of the cytochrome b6-f complex, which mediates electron transfer between photosystem II (PSII) and photosystem I (PSI), cyclic electron flow around PSI, and state transitions. The sequence is that of Cytochrome b6-f complex iron-sulfur subunit from Prochlorococcus marinus (strain SARG / CCMP1375 / SS120).